The following is a 406-amino-acid chain: Phosphatidylserine decarboxylase proenzyme, mitochondrial (406 aa).

The transit peptide at 1-49 (MAVAGGRGCVRSLREGVLWRSSPCHCDYTATRHFLGALQKLPLQAWVRK) directs the protein to the mitochondrion. Over 50–60 (VHTAPLRTLFL) the chain is Mitochondrial matrix. A helical membrane pass occupies residues 61 to 79 (LRPVPILLAAGGGYAGYRQ). Residues 80–406 (YEKYRERQLE…ILFGEALGSL (327 aa)) are Mitochondrial intermembrane-facing. Active-site charge relay system; for autoendoproteolytic cleavage activity residues include D188, H264, and S375. The active-site Schiff-base intermediate with substrate; via pyruvic acid; for decarboxylase activity is S375. S375 carries the post-translational modification Pyruvic acid (Ser); by autocatalysis.

Belongs to the phosphatidylserine decarboxylase family. PSD-B subfamily. Eukaryotic type I sub-subfamily. Heterodimer of a large membrane-associated beta subunit and a small pyruvoyl-containing alpha subunit. It depends on pyruvate as a cofactor. Post-translationally, is synthesized initially as an inactive proenzyme. Formation of the active enzyme involves a self-maturation process in which the active site pyruvoyl group is generated from an internal serine residue via an autocatalytic post-translational modification. Two non-identical subunits are generated from the proenzyme in this reaction, and the pyruvate is formed at the N-terminus of the alpha chain, which is derived from the carboxyl end of the proenzyme. The autoendoproteolytic cleavage occurs by a canonical serine protease mechanism, in which the side chain hydroxyl group of the serine supplies its oxygen atom to form the C-terminus of the beta chain, while the remainder of the serine residue undergoes an oxidative deamination to produce ammonia and the pyruvoyl prosthetic group on the alpha chain. During this reaction, the Ser that is part of the protease active site of the proenzyme becomes the pyruvoyl prosthetic group, which constitutes an essential element of the active site of the mature decarboxylase.

The protein resides in the mitochondrion inner membrane. Its subcellular location is the cytoplasm. The protein localises to the lipid droplet. It catalyses the reaction a 1,2-diacyl-sn-glycero-3-phospho-L-serine + H(+) = a 1,2-diacyl-sn-glycero-3-phosphoethanolamine + CO2. The protein operates within phospholipid metabolism; phosphatidylethanolamine biosynthesis. Its activity is regulated as follows. Inhibited by hydroxylamine. Catalyzes the formation of phosphatidylethanolamine (PtdEtn) from phosphatidylserine (PtdSer). Plays a central role in phospholipid metabolism and in the interorganelle trafficking of phosphatidylserine. May be involved in lipid droplet biogenesis at the endoplasmic reticulum membrane. In Rattus norvegicus (Rat), this protein is Phosphatidylserine decarboxylase proenzyme, mitochondrial.